The chain runs to 157 residues: MPKKTIYFGAGWFTDRQNKAYKEAMEALKENPTIDLENSYVPLDNQYKGIRVDEHPEYLHDKVWATATYNNDLNGIKTNDIMLGVYIPDEEDVGLGMELGYALSQGKYVLLVIPDEDYGKPINLMSWGVSDNVIKMSQLKDFNFNKPRFDFYEGAVY.

Residue Glu-98 is the Nucleophile of the active site.

Belongs to the nucleoside deoxyribosyltransferase family. In terms of assembly, homohexamer.

The catalysed reaction is 2-deoxy-D-ribosyl-base(1) + base(2) = 2-deoxy-D-ribosyl-base(2) + base(1).. It participates in nucleotide metabolism; nucleotide salvage pathway. Functionally, catalyzes the cleavage of the glycosidic bond of 2'-deoxyribonucleosides and the transfer of the deoxyribosyl moiety to an acceptor purine or pyrimidine base. The protein is Nucleoside deoxyribosyltransferase (ntd) of Lactobacillus leichmannii.